The primary structure comprises 354 residues: 3'-5' exonuclease (354 aa).

The tract at residues 1 to 120 is disordered; the sequence is MERYLTKMPI…PSPEKEKPEK (120 aa). Basic and acidic residues predominate over residues 13–50; that stretch reads KANEVPKKEAFAKKETPKVARKATKTDTPKELKDKENA. Residues 59–70 are compositionally biased toward basic residues; sequence TKGRPGRPAAKR. Residues 71–91 show a composition bias toward basic and acidic residues; the sequence is KNLDTPDVKDEKIAMEEENPP. Residues Ser104, Ser110, and Ser112 each carry the phosphoserine modification. The region spanning 149–314 is the 3'-5' exonuclease domain; it reads WVEKQKDDVV…GQVIYRELER (166 aa). Asp163, Glu165, and Asp301 together coordinate Mg(2+).

This sequence belongs to the WRNexo family.

The protein localises to the nucleus. Its function is as follows. Has exonuclease activity on both single-stranded and duplex templates bearing overhangs, but not blunt ended duplex DNA, and cleaves in a 3'-5' direction. Essential for the formation of DNA replication focal centers. Has an important role in maintaining genome stability. This chain is 3'-5' exonuclease, found in Drosophila sechellia (Fruit fly).